The chain runs to 288 residues: Nucleotide-binding protein Veis_1053 (288 aa).

10-17 is a binding site for ATP; the sequence is GMSGSGKS. Position 59–62 (59–62) interacts with GTP; that stretch reads DVRS.

The protein belongs to the RapZ-like family.

In terms of biological role, displays ATPase and GTPase activities. This is Nucleotide-binding protein Veis_1053 from Verminephrobacter eiseniae (strain EF01-2).